The sequence spans 1992 residues: Otoferlin (1992 aa).

C2 domains are found at residues 1-98 (MALV…EVSD), 241-362 (KRSK…HKWA), and 405-536 (IEGN…FLPT). The Cytoplasmic segment spans residues 1–1958 (MALVVHLKTV…IRYFIWHNYR (1958 aa)). A disordered region spans residues 655 to 699 (PALAKKKKEGGGESEEEESELIHNSSEEEAEDDGDLTSVPSTPPM). C2 domains follow at residues 952–1077 (IQAV…PPRF) and 1124–1250 (RGPI…NNWA). Ca(2+) contacts are provided by Asp984, Asp990, Asp1046, and Asp1048. Residues 1282–1363 (VKVDLNEDEK…ESAEIKADDF (82 aa)) adopt a coiled-coil conformation. Disordered stretches follow at residues 1288–1311 (EDEK…EEEP) and 1354–1399 (ESAE…KPKV). Over residues 1356–1399 (AEIKADDFPMKGTKPKEKSKDKKSTKDKKKNNDGTEKRPPKPKV) the composition is skewed to basic and acidic residues. 2 consecutive C2 domains span residues 1470 to 1588 (DPNM…ATCG) and 1711 to 1860 (PAPG…KQCS). Residues Asp1503, Asp1509, Asp1558, Asp1560, Asp1566, Asp1831, Ser1834, and Asp1837 each contribute to the Ca(2+) site. The helical transmembrane segment at 1959 to 1979 (WLILKALALLLLLLLVGLFLY) threads the bilayer. Topologically, residues 1980 to 1992 (SIPGYLVKKLLGA) are extracellular.

The protein belongs to the ferlin family. It depends on Ca(2+) as a cofactor.

It is found in the cytoplasmic vesicle. It localises to the secretory vesicle. The protein resides in the synaptic vesicle membrane. The protein localises to the basolateral cell membrane. Its subcellular location is the endoplasmic reticulum membrane. It is found in the golgi apparatus membrane. It localises to the presynaptic cell membrane. The protein resides in the cell membrane. Functionally, key calcium ion sensor involved in the Ca(2+)-triggered synaptic vesicle-plasma membrane fusion and in the control of neurotransmitter release at these output synapses. The polypeptide is Otoferlin (otof) (Danio rerio (Zebrafish)).